The sequence spans 807 residues: 1-phosphatidylinositol 4,5-bisphosphate phosphodiesterase delta-4 (807 aa).

Residues 16 to 124 (LLMQEGTMMR…WMRGLQLLVD (109 aa)) enclose the PH domain. The segment at 26 to 53 (KVRTKSWKKLRYFRLQNDGMTVWHGSQP) is substrate binding. EF-hand domains are found at residues 134–169 (QMDQ…MNVE), 170–205 (MDEE…LTKR), and 203–237 (TKRT…EQKE). Residues Asp-147, Asn-149, Asp-151, Arg-153, Glu-158, Asp-183, Ser-187, Asp-189, and Glu-194 each contribute to the Ca(2+) site. The GBA motif lies at 213–243 (EDFSSDKQKLTLLEFVDFLRKEQKEKDHAPD). A PI-PLC X-box domain is found at 290-435 (QDMTQPLSHY…LRGKILVKGK (146 aa)). The active site involves His-305. Residues Asn-306, Glu-335, and Asp-337 each contribute to the Ca(2+) site. His-350 is an active-site residue. Ca(2+) is bound at residue Glu-384. Lys-433 and Lys-435 together coordinate substrate. The segment at 442–490 (VDKEEEEEEEEEELEKDEGPDLDPASPELDTQPQPETQGQAAGNKKERK) is disordered. The span at 443–462 (DKEEEEEEEEEELEKDEGPD) shows a compositional bias: acidic residues. The segment covering 470 to 482 (LDTQPQPETQGQA) has biased composition (polar residues). Residues 538 to 654 (LSALVVYLRT…GYVLKPEFLR (117 aa)) form the PI-PLC Y-box domain. Substrate contacts are provided by Ser-567 and Arg-594. The 128-residue stretch at 654–781 (RDTQSSFNPE…QGYRHVSLLS (128 aa)) folds into the C2 domain. Residues Asp-697, Asn-721, Asp-750, and Tyr-751 each coordinate Ca(2+). Residues 776–779 (HVSL) carry the PDZ-binding motif.

As to quaternary structure, interacts with GRIP1. Interacts (via GBA motif) with guanine nucleotide-binding protein G(i) alpha subunit GNAI3 (inactive GDP-bound form)l low-affinity interaction. Ca(2+) is required as a cofactor.

The protein localises to the membrane. The protein resides in the nucleus. It is found in the cytoplasm. Its subcellular location is the endoplasmic reticulum. The enzyme catalyses a 1,2-diacyl-sn-glycero-3-phospho-(1D-myo-inositol-4,5-bisphosphate) + H2O = 1D-myo-inositol 1,4,5-trisphosphate + a 1,2-diacyl-sn-glycerol + H(+). It carries out the reaction a 1,2-diacyl-sn-glycero-3-phospho-(1D-myo-inositol) + H2O = 1D-myo-inositol 1-phosphate + a 1,2-diacyl-sn-glycerol + H(+). Its function is as follows. Hydrolyzes the phosphatidylinositol 4,5-bisphosphate (PIP2) to generate 2 second messenger molecules diacylglycerol (DAG) and inositol 1,4,5-trisphosphate (IP3). DAG mediates the activation of protein kinase C (PKC), while IP3 releases Ca(2+) from intracellular stores. Required for acrosome reaction in sperm during fertilization, probably by acting as an important enzyme for intracellular Ca(2+) mobilization in the zona pellucida-induced acrosome reaction. May play a role in cell growth. Modulates the liver regeneration in cooperation with nuclear PKC. Overexpression up-regulates the Erk signaling pathway and proliferation. The chain is 1-phosphatidylinositol 4,5-bisphosphate phosphodiesterase delta-4 from Mus musculus (Mouse).